Reading from the N-terminus, the 162-residue chain is MTPLFRKAVWLLFAVSVCAFAGSLAAQYVLGMEPCVLCISQRLCVLATALCTAIVLMCRPRRRAGGLFGAVFISIPAVTGISVAAYQLWLQSLPPGTAPSCGAPWTFRLKGWPLFDWFEPVVRGFGNCAEPDYLLGIALPVWSVAYFLAVVLTVWWAWARAK.

The Cytoplasmic portion of the chain corresponds to 1 to 8 (MTPLFRKA). Residues 9–25 (VWLLFAVSVCAFAGSLA) form a helical membrane-spanning segment. At 26 to 43 (AQYVLGMEPCVLCISQRL) the chain is on the periplasmic side. A disulfide bond links cysteine 35 and cysteine 38. The helical transmembrane segment at 44-60 (CVLATALCTAIVLMCRP) threads the bilayer. Over 61–67 (RRRAGGL) the chain is Cytoplasmic. Residues 68–85 (FGAVFISIPAVTGISVAA) form a helical membrane-spanning segment. Topologically, residues 86 to 141 (YQLWLQSLPPGTAPSCGAPWTFRLKGWPLFDWFEPVVRGFGNCAEPDYLLGIALPV) are periplasmic. A disulfide bridge links cysteine 101 with cysteine 128. A helical transmembrane segment spans residues 142–160 (WSVAYFLAVVLTVWWAWAR). The Cytoplasmic portion of the chain corresponds to 161 to 162 (AK).

The protein belongs to the DsbB family.

Its subcellular location is the cell inner membrane. Its function is as follows. Required for disulfide bond formation in some periplasmic proteins. Acts by oxidizing the DsbA protein. The protein is Disulfide bond formation protein B of Neisseria meningitidis serogroup B (strain ATCC BAA-335 / MC58).